A 319-amino-acid chain; its full sequence is tRNA-cytidine(32) 2-sulfurtransferase (319 aa).

Positions 43 to 48 (SGGKDS) match the PP-loop motif motif. [4Fe-4S] cluster-binding residues include Cys-118, Cys-121, and Cys-209.

It belongs to the TtcA family. In terms of assembly, homodimer. Requires Mg(2+) as cofactor. [4Fe-4S] cluster serves as cofactor.

The protein localises to the cytoplasm. It carries out the reaction cytidine(32) in tRNA + S-sulfanyl-L-cysteinyl-[cysteine desulfurase] + AH2 + ATP = 2-thiocytidine(32) in tRNA + L-cysteinyl-[cysteine desulfurase] + A + AMP + diphosphate + H(+). It participates in tRNA modification. Its function is as follows. Catalyzes the ATP-dependent 2-thiolation of cytidine in position 32 of tRNA, to form 2-thiocytidine (s(2)C32). The sulfur atoms are provided by the cysteine/cysteine desulfurase (IscS) system. The chain is tRNA-cytidine(32) 2-sulfurtransferase from Neisseria meningitidis serogroup C / serotype 2a (strain ATCC 700532 / DSM 15464 / FAM18).